The following is a 371-amino-acid chain: MSGASSGTAIGAHLFGVSPEYRVLIGDEGAGPSKSLSEVSFSVWYRSRAARLVILCLVASFLVPCLTFLIAEAVMGQTVTTPLSLTLDHWSEVRARAHNQGVEVRKKKWITLCKAEWVMMNVGWPREGTFSLDNISQVKKKIFAPGPHGHPDQVPYITTWRSLATDPPSWVRPFLPPPKPPTPLPQPLSPQPSAPLTSSLYPVVPKPDPPKPPVLPPDPSSPLIDLLTEEPPPYPGGHGPPPSGPRTPAASPIVSRLRERRENPAEESQALPLREGPNNRPQYWPFSASDLYNWKSHNPPFSQDPVALTNLIESILVTHQPTWDDCQQLLQALLTGEERQRVLLEARKQVPGEDGRPTQLPNVIDETFPLT.

At 1-51 (MSGASSGTAIGAHLFGVSPEYRVLIGDEGAGPSKSLSEVSFSVWYRSRAAR) the chain is on the cytoplasmic side. The chain crosses the membrane as a helical span at residues 52–72 (LVILCLVASFLVPCLTFLIAE). The Extracellular portion of the chain corresponds to 73–371 (AVMGQTVTTP…NVIDETFPLT (299 aa)). N-linked (GlcNAc...) asparagine; by host glycosylation occurs at asparagine 134. Disordered regions lie at residues 171 to 281 (VRPF…NNRP) and 350 to 371 (VPGE…FPLT). A compositionally biased stretch (pro residues) spans 174–193 (FLPPPKPPTPLPQPLSPQPS). The span at 194 to 203 (APLTSSLYPV) shows a compositional bias: low complexity. 2 stretches are compositionally biased toward pro residues: residues 204 to 220 (VPKP…PDPS) and 230 to 245 (EPPP…PSGP).

Glycosylated by host. Post-translationally, cleaved by host near the middle of the molecule, releasing the c-terminal half containing capsid and nucleoprotein domains op GAG.

The protein resides in the host cell membrane. Plays a role in viral particle release. Presumably acts by facilitating the fission of the virion bud at the cell surface. This chain is Glyco-Gag protein, found in Feline sarcoma virus (strain Snyder-Theilen).